The chain runs to 1509 residues: Dynein axonemal assembly factor 1 homolog (1509 aa).

LRR repeat units lie at residues 34–56 (RLND…EEYT), 57–78 (ELKC…EKLS), 79–100 (KLKC…EPCR), 101–122 (ELDT…GTNI), 125–146 (VLNT…SDLV), and 150–171 (TLSV…KIFE). One can recognise an LRRCT domain in the interval 185–223 (PVVSRLPQYRKTLILACKELTYLDSRPVFPRDRACAEAW). Disordered stretches follow at residues 252 to 280 (CTIR…DDTC), 306 to 327 (HPTS…ATSS), 962 to 1008 (SGDL…DSKN), and 1103 to 1122 (TLQT…KLRN). Low complexity predominate over residues 309–318 (SESGASTSSS). Residues 978–990 (SESEDYDTADDEY) show a composition bias toward acidic residues. A compositionally biased stretch (polar residues) spans 1103 to 1112 (TLQTSFSTVG).

Belongs to the DNAAF1 family.

Its subcellular location is the cell projection. The protein localises to the cilium. In terms of biological role, cilium-specific protein required for cilia structures. This is Dynein axonemal assembly factor 1 homolog (dtr) from Drosophila yakuba (Fruit fly).